The sequence spans 141 residues: Endoribonuclease YbeY (141 aa).

3 residues coordinate Zn(2+): His-101, His-105, and His-111.

Belongs to the endoribonuclease YbeY family. Zn(2+) serves as cofactor.

The protein resides in the cytoplasm. Functionally, single strand-specific metallo-endoribonuclease involved in late-stage 70S ribosome quality control and in maturation of the 3' terminus of the 16S rRNA. This is Endoribonuclease YbeY from Nitrosomonas eutropha (strain DSM 101675 / C91 / Nm57).